The primary structure comprises 41 residues: Fibrinogen beta chain (41 aa).

Positions 1–41 are disordered; the sequence is ADDYDDEVLPDARGHRPIDRKREELPSLRPAPPPISGGGYR. Tyr4 carries the sulfotyrosine modification. Positions 10–26 are enriched in basic and acidic residues; it reads PDARGHRPIDRKREELP. Residues 14–16 are beta-chain polymerization, binding distal domain of another fibrin; that stretch reads GHR.

In terms of assembly, heterohexamer; disulfide linked. Contains 2 sets of 3 non-identical chains (alpha, beta and gamma). The 2 heterotrimers are in head to head conformation with the N-termini in a small central domain. Conversion of fibrinogen to fibrin is triggered by thrombin, which cleaves fibrinopeptides A and B from alpha and beta chains, and thus exposes the N-terminal polymerization sites responsible for the formation of the soft clot.

Its subcellular location is the secreted. Its function is as follows. Cleaved by the protease thrombin to yield monomers which, together with fibrinogen alpha (FGA) and fibrinogen gamma (FGG), polymerize to form an insoluble fibrin matrix. Fibrin has a major function in hemostasis as one of the primary components of blood clots. In addition, functions during the early stages of wound repair to stabilize the lesion and guide cell migration during re-epithelialization. Was originally thought to be essential for platelet aggregation, based on in vitro studies using anticoagulated blood. However subsequent studies have shown that it is not absolutely required for thrombus formation in vivo. Enhances expression of SELP in activated platelets. Maternal fibrinogen is essential for successful pregnancy. Fibrin deposition is also associated with infection, where it protects against IFNG-mediated hemorrhage. May also facilitate the antibacterial immune response via both innate and T-cell mediated pathways. This chain is Fibrinogen beta chain (FGB), found in Oryctolagus cuniculus (Rabbit).